The sequence spans 93 residues: Pyrimidine/purine nucleoside phosphorylase (93 aa).

This sequence belongs to the nucleoside phosphorylase PpnP family.

It catalyses the reaction a purine D-ribonucleoside + phosphate = a purine nucleobase + alpha-D-ribose 1-phosphate. The enzyme catalyses adenosine + phosphate = alpha-D-ribose 1-phosphate + adenine. The catalysed reaction is cytidine + phosphate = cytosine + alpha-D-ribose 1-phosphate. It carries out the reaction guanosine + phosphate = alpha-D-ribose 1-phosphate + guanine. It catalyses the reaction inosine + phosphate = alpha-D-ribose 1-phosphate + hypoxanthine. The enzyme catalyses thymidine + phosphate = 2-deoxy-alpha-D-ribose 1-phosphate + thymine. The catalysed reaction is uridine + phosphate = alpha-D-ribose 1-phosphate + uracil. It carries out the reaction xanthosine + phosphate = alpha-D-ribose 1-phosphate + xanthine. In terms of biological role, catalyzes the phosphorolysis of diverse nucleosides, yielding D-ribose 1-phosphate and the respective free bases. Can use uridine, adenosine, guanosine, cytidine, thymidine, inosine and xanthosine as substrates. Also catalyzes the reverse reactions. The protein is Pyrimidine/purine nucleoside phosphorylase of Shewanella pealeana (strain ATCC 700345 / ANG-SQ1).